Here is a 95-residue protein sequence, read N- to C-terminus: Protein TusB (95 aa).

This sequence belongs to the DsrH/TusB family. Heterohexamer, formed by a dimer of trimers. The hexameric TusBCD complex contains 2 copies each of TusB, TusC and TusD. The TusBCD complex interacts with TusE.

Its subcellular location is the cytoplasm. Functionally, part of a sulfur-relay system required for 2-thiolation of 5-methylaminomethyl-2-thiouridine (mnm(5)s(2)U) at tRNA wobble positions. The chain is Protein TusB from Salmonella agona (strain SL483).